Reading from the N-terminus, the 235-residue chain is MARRPSTDDLRSGPERFMALVKTTVPPVHPAGLPFIGASLALAAAGRRNRWVRGAGLVAAGANAAFFRHPPRVPPTRPGVVVAPADGLICLVEDAEPPAELNLPARPVPRVSIFLSIFDAHVQRIPISGEVVAVEHRPGLFGSAELAAASEDNERNSVVIRTDTGAQVIAVQIAGLVARRIVCDLTTGDKVTIGDTYGLIRYGSRLDTYLPEGTDIQVLPGQRAVGGETILAELP.

Catalysis depends on S204, which acts as the Schiff-base intermediate with substrate; via pyruvic acid. S204 carries the pyruvic acid (Ser); by autocatalysis modification.

This sequence belongs to the phosphatidylserine decarboxylase family. PSD-A subfamily. Heterodimer of a large membrane-associated beta subunit and a small pyruvoyl-containing alpha subunit. Pyruvate serves as cofactor. Post-translationally, is synthesized initially as an inactive proenzyme. Formation of the active enzyme involves a self-maturation process in which the active site pyruvoyl group is generated from an internal serine residue via an autocatalytic post-translational modification. Two non-identical subunits are generated from the proenzyme in this reaction, and the pyruvate is formed at the N-terminus of the alpha chain, which is derived from the carboxyl end of the proenzyme. The post-translation cleavage follows an unusual pathway, termed non-hydrolytic serinolysis, in which the side chain hydroxyl group of the serine supplies its oxygen atom to form the C-terminus of the beta chain, while the remainder of the serine residue undergoes an oxidative deamination to produce ammonia and the pyruvoyl prosthetic group on the alpha chain.

The protein localises to the cell membrane. It carries out the reaction a 1,2-diacyl-sn-glycero-3-phospho-L-serine + H(+) = a 1,2-diacyl-sn-glycero-3-phosphoethanolamine + CO2. Its pathway is phospholipid metabolism; phosphatidylethanolamine biosynthesis; phosphatidylethanolamine from CDP-diacylglycerol: step 2/2. Its function is as follows. Catalyzes the formation of phosphatidylethanolamine (PtdEtn) from phosphatidylserine (PtdSer). This chain is Phosphatidylserine decarboxylase proenzyme, found in Mycobacterium sp. (strain JLS).